The primary structure comprises 727 residues: YTH domain-containing protein 1 (727 aa).

The segment covering 1-12 (MAADSREEKDGE) has biased composition (basic and acidic residues). Residues 1–338 (MAADSREEKD…KHEKLSSSVR (338 aa)) form a disordered region. Position 35 is a phosphoserine (Ser35). Over residues 50–59 (DRMESTDTKR) the composition is skewed to basic and acidic residues. The segment covering 63-90 (SVHSRQLVSKPLSSSVSNNKRIVSTKGK) has biased composition (polar residues). The segment covering 91-115 (SATEYKNEEYQRSERNKRLDADRKI) has biased composition (basic and acidic residues). Lys96 participates in a covalent cross-link: Glycyl lysine isopeptide (Lys-Gly) (interchain with G-Cter in SUMO2). Phosphoserine is present on residues Ser118 and Ser120. A compositionally biased stretch (basic and acidic residues) spans 124–144 (EPYKNQPEKTCVRKRDPERRA). Ser146 carries the post-translational modification Phosphoserine. Residue Thr148 is modified to Phosphothreonine. 2 stretches are compositionally biased toward basic and acidic residues: residues 151 to 163 (GSER…DRRA) and 170 to 185 (SKEE…DHET). A compositionally biased stretch (acidic residues) spans 199–254 (ENEEEGVEEDVEEDEEVEEDAEEDEEVDEDGEEEEEEEEEEEEEEEEEEEEYEQDE). A compositionally biased stretch (basic and acidic residues) spans 255 to 270 (RDQKEEGNDYDTRSEA). Over residues 280–289 (FTDGSVRSGS) the composition is skewed to polar residues. 5 positions are modified to phosphoserine: Ser308, Ser315, Ser317, Ser318, and Ser320. Low complexity predominate over residues 315-325 (SGSSASESYAG). Residues 355–492 (ARFFLIKSNN…ECGTQLCLLF (138 aa)) enclose the YTH domain. RNA-binding positions include 361–363 (KSN) and 377–378 (WS). Ser424 carries the phosphoserine modification. Trp428 provides a ligand contact to RNA. A Phosphoserine modification is found at Ser435. Position 476 (Asp476) interacts with RNA. Residues 508–523 (RHKRRMHSQPRSRGRP) show a composition bias toward basic residues. Disordered regions lie at residues 508–564 (RHKR…PGYL), 607–643 (GMPP…HPVP), and 669–727 (AVVS…RYRR). Over residues 524–564 (SRREPVRDVGRRRPEDYDIHNSRKKPRIDYPPEFHQRPGYL) the composition is skewed to basic and acidic residues. The residue at position 545 (Ser545) is a Phosphoserine. A compositionally biased stretch (basic and acidic residues) spans 679–727 (RERDRERERDRPRDNRRDRERDRGRDRERERERLCDRDRDRGERGRYRR).

As to quaternary structure, interacts with SRSF1. Interacts with SRSF2. Interacts with SRSF3. Interacts with SRSF7. Interacts with SRSF10. Interacts with CPSF6. Interacts with KHDRBS1/SAM68. Interacts with TRA2B. Interacts with KHDRBS3. Interacts with EMD. Interacts with RBMX. Interacts with ZCCHC8. Post-translationally, tyrosine phosphorylated.

Its subcellular location is the nucleus. It is found in the nucleus speckle. Regulator of alternative splicing that specifically recognizes and binds N6-methyladenosine (m6A)-containing RNAs. M6A is a modification present at internal sites of mRNAs and some non-coding RNAs and plays a role in the efficiency of mRNA splicing, processing and stability. Acts as a key regulator of exon-inclusion or exon-skipping during alternative splicing via interaction with mRNA splicing factors SRSF3 and SRSF10. Specifically binds m6A-containing mRNAs and promotes recruitment of SRSF3 to its mRNA-binding elements adjacent to m6A sites, leading to exon-inclusion during alternative splicing. In contrast, interaction with SRSF3 prevents interaction with SRSF10, a splicing factor that promotes exon skipping: this prevents SRSF10 from binding to its mRNA-binding sites close to m6A-containing regions, leading to inhibit exon skipping during alternative splicing. May also regulate alternative splice site selection. Also involved in nuclear export of m6A-containing mRNAs via interaction with SRSF3: interaction with SRSF3 facilitates m6A-containing mRNA-binding to both SRSF3 and NXF1, promoting mRNA nuclear export. Involved in S-adenosyl-L-methionine homeostasis by regulating expression of MAT2A transcripts, probably by binding m6A-containing MAT2A mRNAs. Also recognizes and binds m6A on other RNA molecules. Involved in random X inactivation mediated by Xist RNA: recognizes and binds m6A-containing Xist and promotes transcription repression activity of Xist. Also recognizes and binds m6A-containing single-stranded DNA. Involved in germline development: required for spermatogonial development in males and oocyte growth and maturation in females, probably via its role in alternative splicing. The polypeptide is YTH domain-containing protein 1 (Homo sapiens (Human)).